The sequence spans 121 residues: Protein CHLORORESPIRATORY REDUCTION 42, chloroplastic (121 aa).

As to quaternary structure, biogenesis factor component of the plastidial NDH subcomplex A.

It localises to the plastid. The protein resides in the chloroplast. The protein localises to the chloroplast stroma. Its function is as follows. Required for both formation and activity of the chloroplast NAD(P)H dehydrogenase (NDH) complex of the photosynthetic electron transport chain. Functions in assembly or stabilization of the NDH complex; probably involved, together with CRR1 and CRR6, in the incorporation of NdhJ, NdhM, NdhK and NdhI into the NDH subcomplex A assembly intermediate (NAI500) to produce the complex NAI400. The sequence is that of Protein CHLORORESPIRATORY REDUCTION 42, chloroplastic from Arabidopsis thaliana (Mouse-ear cress).